The following is a 262-amino-acid chain: Diphthine synthase (262 aa).

S-adenosyl-L-methionine contacts are provided by residues Leu-10, Asp-87, Val-90, Ser-115–Ile-116, Leu-166, Ala-209, and His-234.

The protein belongs to the diphthine synthase family. As to quaternary structure, homodimer.

It carries out the reaction 2-[(3S)-amino-3-carboxypropyl]-L-histidyl-[translation elongation factor 2] + 3 S-adenosyl-L-methionine = diphthine-[translation elongation factor 2] + 3 S-adenosyl-L-homocysteine + 3 H(+). Its pathway is protein modification; peptidyl-diphthamide biosynthesis. In terms of biological role, S-adenosyl-L-methionine-dependent methyltransferase that catalyzes the trimethylation of the amino group of the modified target histidine residue in translation elongation factor 2 (EF-2), to form an intermediate called diphthine. The three successive methylation reactions represent the second step of diphthamide biosynthesis. This is Diphthine synthase from Pyrococcus abyssi (strain GE5 / Orsay).